The primary structure comprises 363 residues: MKQKYRIAILPGDGIGPEVMREAYKILSILKDHFSLSLEIQEFNIGGSAIDQEGIALPKKTLLGCQNSDAILFGSVGGKRWDHLPINERPERASLLPLRKHFNLFANLRPAKLYSELQHLSPIRSNIIKNGFDILCVRELTGGIYFGKPSDRVKKNNVEYAFDTEVYYDYEINRIAHLAFQLARTRKFKVCSIDKSNVLNSSILWREVVEKVSKMYPDVHLSHLYIDNATMQIIKNPNQFDVLLCSNLFGDIISDECAVITGSIGMLPSASFNEKNFGLYEPAGGSAPDIAGKNTANPIAQILSLSMLVRYGMKLNKIADKIDDAVALSLKAGYRTADISNDNNFLKTNEMGDVIANFLINGK.

78 to 91 (GKRWDHLPINERPE) is a binding site for NAD(+). Substrate contacts are provided by Arg-99, Arg-109, Arg-138, and Asp-227. Residues Asp-227, Asp-251, and Asp-255 each coordinate Mg(2+). 285–297 (GSAPDIAGKNTAN) is a binding site for NAD(+).

Belongs to the isocitrate and isopropylmalate dehydrogenases family. LeuB type 1 subfamily. In terms of assembly, homodimer. Mg(2+) serves as cofactor. Requires Mn(2+) as cofactor.

The protein localises to the cytoplasm. The catalysed reaction is (2R,3S)-3-isopropylmalate + NAD(+) = 4-methyl-2-oxopentanoate + CO2 + NADH. It participates in amino-acid biosynthesis; L-leucine biosynthesis; L-leucine from 3-methyl-2-oxobutanoate: step 3/4. Its function is as follows. Catalyzes the oxidation of 3-carboxy-2-hydroxy-4-methylpentanoate (3-isopropylmalate) to 3-carboxy-4-methyl-2-oxopentanoate. The product decarboxylates to 4-methyl-2 oxopentanoate. This is 3-isopropylmalate dehydrogenase from Buchnera aphidicola subsp. Uroleucon helianthicola.